Reading from the N-terminus, the 360-residue chain is Probable cinnamyl alcohol dehydrogenase 6 (360 aa).

Cys-48 is a binding site for Zn(2+). Thr-50 contacts NADP(+). The Zn(2+) site is built by His-70, Glu-71, Cys-101, Cys-104, Cys-107, Cys-115, and Cys-164. Residues Thr-168, 192-197, 215-220, Thr-255, Gly-279, and 302-304 each bind NADP(+); these read GLGGLG, STSPAK, and SMT.

The protein belongs to the zinc-containing alcohol dehydrogenase family. In terms of assembly, homodimer. Zn(2+) is required as a cofactor.

The enzyme catalyses (E)-cinnamyl alcohol + NADP(+) = (E)-cinnamaldehyde + NADPH + H(+). It catalyses the reaction (E)-coniferol + NADP(+) = (E)-coniferaldehyde + NADPH + H(+). It carries out the reaction (E)-sinapyl alcohol + NADP(+) = (E)-sinapaldehyde + NADPH + H(+). The catalysed reaction is (E)-4-coumaroyl alcohol + NADP(+) = (E)-4-coumaraldehyde + NADPH + H(+). The enzyme catalyses (E)-caffeyl alcohol + NADP(+) = (E)-caffeyl aldehyde + NADPH + H(+). The protein operates within aromatic compound metabolism; phenylpropanoid biosynthesis. Involved in lignin biosynthesis. Catalyzes the final step specific for the production of lignin monomers. Catalyzes the NADPH-dependent reduction of coniferaldehyde, 5-hydroxyconiferaldehyde, sinapaldehyde, 4-coumaraldehyde and caffeyl aldehyde to their respective alcohols. The chain is Probable cinnamyl alcohol dehydrogenase 6 from Oryza sativa subsp. japonica (Rice).